Reading from the N-terminus, the 365-residue chain is Carbohydrate sulfotransferase 10 (365 aa).

Over Met-1–Leu-6 the chain is Cytoplasmic. Residues Leu-7–Phe-27 form a helical; Signal-anchor for type II membrane protein membrane-spanning segment. Over Ser-28–Asp-356 the chain is Lumenal. N-linked (GlcNAc...) asparagine glycosylation is found at Asn-99 and Asn-104. 3'-phosphoadenylyl sulfate-binding positions include Pro-132 to Gln-138 and Arg-194 to Ser-202. A glycan (N-linked (GlcNAc...) asparagine) is linked at Asn-325.

It belongs to the sulfotransferase 2 family.

It is found in the golgi apparatus membrane. Functionally, catalyzes the transfer of sulfate to position 3 of terminal glucuronic acid of both protein- and lipid-linked oligosaccharides. Participates in biosynthesis of HNK-1 carbohydrate structure, a sulfated glucuronyl-lactosaminyl residue carried by many neural recognition molecules. The protein is Carbohydrate sulfotransferase 10 (chst10) of Danio rerio (Zebrafish).